The sequence spans 1097 residues: DNA-directed RNA polymerase subunit beta (1097 aa).

The interval 1073 to 1097 is disordered; it reads DVNPRRSTPSRPTYESLGVADYDED.

It belongs to the RNA polymerase beta chain family. In cyanobacteria the RNAP catalytic core is composed of 2 alpha, 1 beta, 1 beta', 1 gamma and 1 omega subunit. When a sigma factor is associated with the core the holoenzyme is formed, which can initiate transcription.

It catalyses the reaction RNA(n) + a ribonucleoside 5'-triphosphate = RNA(n+1) + diphosphate. DNA-dependent RNA polymerase catalyzes the transcription of DNA into RNA using the four ribonucleoside triphosphates as substrates. The sequence is that of DNA-directed RNA polymerase subunit beta from Synechococcus sp. (strain RCC307).